The following is a 940-amino-acid chain: Isoleucine--tRNA ligase (940 aa).

The short motif at 58–68 (PYANGDIHIGH) is the 'HIGH' region element. Glu-564 is an L-isoleucyl-5'-AMP binding site. The 'KMSKS' region signature appears at 605–609 (KMSKS). Lys-608 contributes to the ATP binding site. Cys-903, Cys-906, Cys-923, and Cys-926 together coordinate Zn(2+).

This sequence belongs to the class-I aminoacyl-tRNA synthetase family. IleS type 1 subfamily. In terms of assembly, monomer. Zn(2+) is required as a cofactor.

It is found in the cytoplasm. The enzyme catalyses tRNA(Ile) + L-isoleucine + ATP = L-isoleucyl-tRNA(Ile) + AMP + diphosphate. Its function is as follows. Catalyzes the attachment of isoleucine to tRNA(Ile). As IleRS can inadvertently accommodate and process structurally similar amino acids such as valine, to avoid such errors it has two additional distinct tRNA(Ile)-dependent editing activities. One activity is designated as 'pretransfer' editing and involves the hydrolysis of activated Val-AMP. The other activity is designated 'posttransfer' editing and involves deacylation of mischarged Val-tRNA(Ile). The chain is Isoleucine--tRNA ligase from Shewanella piezotolerans (strain WP3 / JCM 13877).